A 436-amino-acid chain; its full sequence is 3-ketoacyl-CoA thiolase (436 aa).

The active-site Acyl-thioester intermediate is Cys-99. Residues His-392 and Cys-422 each act as proton acceptor in the active site.

Belongs to the thiolase-like superfamily. Thiolase family. As to quaternary structure, heterotetramer of two alpha chains (FadJ) and two beta chains (FadI).

The protein localises to the cytoplasm. It catalyses the reaction an acyl-CoA + acetyl-CoA = a 3-oxoacyl-CoA + CoA. It functions in the pathway lipid metabolism; fatty acid beta-oxidation. In terms of biological role, catalyzes the final step of fatty acid oxidation in which acetyl-CoA is released and the CoA ester of a fatty acid two carbons shorter is formed. The sequence is that of 3-ketoacyl-CoA thiolase from Salmonella paratyphi A (strain AKU_12601).